Reading from the N-terminus, the 322-residue chain is GTP 3',8-cyclase (322 aa).

The region spanning 5–217 (SYGRVVDYLR…DIISKKYNIK (213 aa)) is the Radical SAM core domain. GTP is bound at residue R14. C21 and C25 together coordinate [4Fe-4S] cluster. Y27 contributes to the S-adenosyl-L-methionine binding site. A [4Fe-4S] cluster-binding site is contributed by C28. A GTP-binding site is contributed by R64. G68 provides a ligand contact to S-adenosyl-L-methionine. T95 contacts GTP. Residue S119 participates in S-adenosyl-L-methionine binding. K155 provides a ligand contact to GTP. M189 lines the S-adenosyl-L-methionine pocket. [4Fe-4S] cluster contacts are provided by C249 and C252. 254–256 (RLR) provides a ligand contact to GTP. C266 provides a ligand contact to [4Fe-4S] cluster.

Belongs to the radical SAM superfamily. MoaA family. In terms of assembly, monomer and homodimer. [4Fe-4S] cluster serves as cofactor.

The enzyme catalyses GTP + AH2 + S-adenosyl-L-methionine = (8S)-3',8-cyclo-7,8-dihydroguanosine 5'-triphosphate + 5'-deoxyadenosine + L-methionine + A + H(+). The protein operates within cofactor biosynthesis; molybdopterin biosynthesis. Catalyzes the cyclization of GTP to (8S)-3',8-cyclo-7,8-dihydroguanosine 5'-triphosphate. The sequence is that of GTP 3',8-cyclase from Campylobacter fetus subsp. fetus (strain 82-40).